Reading from the N-terminus, the 118-residue chain is Fluoride-specific ion channel FluC 1 (118 aa).

4 consecutive transmembrane segments (helical) span residues 5–25 (FLLVGFGASLGAMLRYGISIF), 39–59 (FFINITGSFLLGFLVSTALGP), 61–81 (WQLFLGTGFMGGYTTFSTFKV), and 98–118 (YVGLTYLCGLIAAFIGIMLGV). Na(+) is bound by residues Gly71 and Thr74.

It belongs to the fluoride channel Fluc/FEX (TC 1.A.43) family.

It is found in the cell membrane. It catalyses the reaction fluoride(in) = fluoride(out). Its activity is regulated as follows. Na(+) is not transported, but it plays an essential structural role and its presence is essential for fluoride channel function. Its function is as follows. Fluoride-specific ion channel. Important for reducing fluoride concentration in the cell, thus reducing its toxicity. This Listeria innocua serovar 6a (strain ATCC BAA-680 / CLIP 11262) protein is Fluoride-specific ion channel FluC 1.